Consider the following 372-residue polypeptide: Silphinene synthase peniA (372 aa).

Mg(2+) is bound by residues Asp-116, Glu-121, Asn-263, Ser-267, and Glu-271. Positions 116–121 match the DDXXE motif motif; the sequence is DDQFDE.

It belongs to the terpene synthase family. Mg(2+) serves as cofactor.

It catalyses the reaction (2E,6E)-farnesyl diphosphate = silphinene + diphosphate. Its pathway is secondary metabolite biosynthesis; terpenoid biosynthesis. In terms of biological role, sesquiterpene cyclase; part of the gene cluster that mediates the biosynthesis of penifulvin A, a potent insecticidal sesquiterpene that features a [5.5.5.6]dioxafenestrane ring. Within the pathway, peniA catalyzes the first step and generates the angular triquinane scaffold silphinene via cyclization of the linear farnesyl pyrophosphate (FPP). The cytochrome P450 monooxygenase peniB and the flavin-dependent monooxygenase peniC then catalyze a series of oxidation reactions to transform silphinene into penifulvin A. This is Silphinene synthase peniA from Penicillium patulum (Penicillium griseofulvum).